The sequence spans 395 residues: Flap endonuclease 1 (395 aa).

The N-domain stretch occupies residues 1–108 (MGILGLSKLL…DELEMRRQKA (108 aa)). Position 34 (aspartate 34) interacts with Mg(2+). DNA is bound at residue arginine 74. Aspartate 90 serves as a coordination point for Mg(2+). The segment at 116 to 136 (EKAKDAGDDEMMEKMSKRTVR) is disordered. The tract at residues 126–257 (MMEKMSKRTV…QKAWEGIQRY (132 aa)) is I-domain. Glutamate 162, glutamate 164, aspartate 183, and aspartate 185 together coordinate Mg(2+). Glutamate 162 contacts DNA. 2 residues coordinate DNA: glycine 235 and aspartate 237. Aspartate 237 provides a ligand contact to Mg(2+). The segment at 340–348 (TQGRLDSFF) is interaction with PCNA.

Belongs to the XPG/RAD2 endonuclease family. FEN1 subfamily. In terms of assembly, interacts with PCNA. Three molecules of FEN1 bind to one PCNA trimer with each molecule binding to one PCNA monomer. PCNA stimulates the nuclease activity without altering cleavage specificity. Requires Mg(2+) as cofactor. Phosphorylated. Phosphorylation upon DNA damage induces relocalization to the nuclear plasma.

The protein localises to the nucleus. It is found in the nucleolus. The protein resides in the nucleoplasm. Its subcellular location is the mitochondrion. Structure-specific nuclease with 5'-flap endonuclease and 5'-3' exonuclease activities involved in DNA replication and repair. During DNA replication, cleaves the 5'-overhanging flap structure that is generated by displacement synthesis when DNA polymerase encounters the 5'-end of a downstream Okazaki fragment. It enters the flap from the 5'-end and then tracks to cleave the flap base, leaving a nick for ligation. Also involved in the long patch base excision repair (LP-BER) pathway, by cleaving within the apurinic/apyrimidinic (AP) site-terminated flap. Acts as a genome stabilization factor that prevents flaps from equilibrating into structures that lead to duplications and deletions. Also possesses 5'-3' exonuclease activity on nicked or gapped double-stranded DNA, and exhibits RNase H activity. Also involved in replication and repair of rDNA and in repairing mitochondrial DNA. This is Flap endonuclease 1 from Leishmania major.